A 137-amino-acid polypeptide reads, in one-letter code: Probable 4-amino-4-deoxy-L-arabinose-phosphoundecaprenol flippase subunit ArnF (137 aa).

The Cytoplasmic segment spans residues Met1–Ala3. Residues Leu4–Met24 form a helical membrane-spanning segment. The Periplasmic segment spans residues Arg25–Arg44. A helical transmembrane segment spans residues Ala45–Leu65. Residues Ala66–Ala76 are Cytoplasmic-facing. Residues Tyr77–Phe97 form a helical membrane-spanning segment. The Periplasmic segment spans residues Asp98–Thr100. The helical transmembrane segment at Phe101–Ala121 threads the bilayer. Residues Arg122–Pro137 lie on the Cytoplasmic side of the membrane.

It belongs to the ArnF family. Heterodimer of ArnE and ArnF.

The protein resides in the cell inner membrane. It participates in bacterial outer membrane biogenesis; lipopolysaccharide biosynthesis. Its function is as follows. Translocates 4-amino-4-deoxy-L-arabinose-phosphoundecaprenol (alpha-L-Ara4N-phosphoundecaprenol) from the cytoplasmic to the periplasmic side of the inner membrane. The sequence is that of Probable 4-amino-4-deoxy-L-arabinose-phosphoundecaprenol flippase subunit ArnF from Pseudomonas aeruginosa (strain LESB58).